The following is a 192-amino-acid chain: uncharacterized protein (192 aa).

The 132-residue stretch at 29–160 folds into the Nudix hydrolase domain; it reads QRQAAVLVPI…PLDIHRRGND (132 aa). The short motif at 67-89 is the Nudix box element; that stretch reads GAVDNTDATLIAAALREAQEEVA. Positions 83 and 87 each coordinate Mg(2+).

It belongs to the Nudix hydrolase family. PCD1 subfamily. The cofactor is Mn(2+). Requires Mg(2+) as cofactor.

Its function is as follows. Probably mediates the hydrolysis of some nucleoside diphosphate derivatives. This is an uncharacterized protein from Klebsiella pneumoniae (strain 342).